The chain runs to 135 residues: Large ribosomal subunit protein uL16c (135 aa).

Belongs to the universal ribosomal protein uL16 family. As to quaternary structure, part of the 50S ribosomal subunit.

Its subcellular location is the plastid. It localises to the chloroplast. This is Large ribosomal subunit protein uL16c from Platanus occidentalis (Sycamore).